The sequence spans 280 residues: Urease accessory protein UreD (280 aa).

It belongs to the UreD family. UreD, UreF and UreG form a complex that acts as a GTP-hydrolysis-dependent molecular chaperone, activating the urease apoprotein by helping to assemble the nickel containing metallocenter of UreC. The UreE protein probably delivers the nickel.

It localises to the cytoplasm. Its function is as follows. Required for maturation of urease via the functional incorporation of the urease nickel metallocenter. The sequence is that of Urease accessory protein UreD from Pseudomonas aeruginosa (strain UCBPP-PA14).